The sequence spans 476 residues: uncharacterized protein (476 aa).

The next 10 membrane-spanning stretches (helical) occupy residues 4-24, 81-101, 141-161, 174-194, 207-227, 233-253, 300-320, 351-371, 391-411, and 414-434; these read FFSFINSVLWGSVMIYLLFGA, ALAITAGGPGAVFWMWVAAFI, WMGVLFAVFLLIAYGIIFSGV, FDFPPLVTGIILAVFTLLAIT, FVPLMAIIWVLTSLVICVMNI, VIWSIFESAFGWQEAAGGAAG, MIGIFIDTLVICTASAMLILL, FVTLVVILFAFSSIVANYIYA, ICTFATVIGGTLLSLPLMWQL, and IIMACMAITNLTAILLLSPVV.

It belongs to the alanine or glycine:cation symporter (AGCS) (TC 2.A.25) family.

It localises to the cell inner membrane. This is an uncharacterized protein from Escherichia coli (strain K12).